A 582-amino-acid polypeptide reads, in one-letter code: Hemagglutinin-neuraminidase (582 aa).

A helical membrane pass occupies residues isoleucine 35–leucine 55. Disulfide bonds link cysteine 178–cysteine 202, cysteine 192–cysteine 253, and cysteine 244–cysteine 257. N-linked (GlcNAc...) asparagine; by host glycans are attached at residues asparagine 284 and asparagine 329. 3 cysteine pairs are disulfide-bonded: cysteine 350-cysteine 471, cysteine 382-cysteine 392, and cysteine 465-cysteine 475. Asparagine 400 and asparagine 448 each carry an N-linked (GlcNAc...) asparagine; by host glycan. N-linked (GlcNAc...) asparagine; by host glycosylation occurs at asparagine 507. Cysteine 545 and cysteine 556 are joined by a disulfide.

It belongs to the paramyxoviruses hemagglutinin-neuraminidase family. As to quaternary structure, homotetramer; composed of disulfide-linked homodimers. Interacts with F protein trimer.

The protein localises to the virion membrane. It is found in the host cell membrane. The catalysed reaction is Hydrolysis of alpha-(2-&gt;3)-, alpha-(2-&gt;6)-, alpha-(2-&gt;8)- glycosidic linkages of terminal sialic acid residues in oligosaccharides, glycoproteins, glycolipids, colominic acid and synthetic substrates.. Its function is as follows. Attaches the virus to alpha-2,3-linked sialic acid-containing cell receptors and thereby initiating infection. Binding of HN protein to the receptor induces a conformational change that allows the F protein to trigger virion/cell membranes fusion. Binds to the glycan motifs sialyl Lewis (SLe) and GM2 ganglioside (GM2-glycan). Neuraminidase activity ensures the efficient spread of the virus by dissociating the mature virions from the neuraminic acid containing glycoproteins. The sequence is that of Hemagglutinin-neuraminidase (HN) from Homo sapiens (Human).